A 327-amino-acid polypeptide reads, in one-letter code: tRNA dimethylallyltransferase (327 aa).

14–21 (GPTASGKT) is a binding site for ATP. A substrate-binding site is contributed by 16–21 (TASGKT). Interaction with substrate tRNA stretches follow at residues 39-42 (DSAL) and 163-167 (QRIQR).

It belongs to the IPP transferase family. In terms of assembly, monomer. Requires Mg(2+) as cofactor.

It carries out the reaction adenosine(37) in tRNA + dimethylallyl diphosphate = N(6)-dimethylallyladenosine(37) in tRNA + diphosphate. Functionally, catalyzes the transfer of a dimethylallyl group onto the adenine at position 37 in tRNAs that read codons beginning with uridine, leading to the formation of N6-(dimethylallyl)adenosine (i(6)A). The chain is tRNA dimethylallyltransferase from Xanthomonas oryzae pv. oryzae (strain MAFF 311018).